A 259-amino-acid chain; its full sequence is NADPH-dependent reductase BacG (259 aa).

Residues 12–15, 34–36, 62–63, I90, K113, and 185–191 contribute to the NADP(+) site; these read SQGI, SRN, DM, and GFIATDR.

Belongs to the short-chain dehydrogenases/reductases (SDR) family. In terms of assembly, homodimer.

It localises to the cytoplasm. The protein operates within antibiotic biosynthesis; bacilysin biosynthesis. Functionally, along with the bacABCDEF operon, BacG is involved in the biosynthesis of the nonribosomally synthesized dipeptide antibiotic bacilysin, composed of L-alanine and L-anticapsin. Bacilysin is an irreversible inactivator of the glutaminase domain of glucosamine synthetase. BacG catalyzes the stereoselective reduction of exocyclic-delta(3),delta(5)-dihydro-hydroxyphenylpyruvate (ex-H2HPP), adding a pro-S hydride equivalent to C4 position to yield tetrahydro-hydroxyphenylpyruvate (H4HPP). Although the 3Z,7R-ex-H2HPP isomer is kinetically disfavored by BacB and produced in a smaller quantity than 3E,7R-ex-H2HPP, it is the preferred substrate for the conjugate reduction reaction of BacG. This chain is NADPH-dependent reductase BacG, found in Bacillus subtilis (strain 168).